Reading from the N-terminus, the 174-residue chain is Methylamine utilization protein MauL (174 aa).

Its pathway is one-carbon metabolism; methylamine degradation. Its function is as follows. Probably involved in TTQ prosthetic group biosynthesis. The polypeptide is Methylamine utilization protein MauL (mauL) (Methylophilus methylotrophus (Bacterium W3A1)).